A 113-amino-acid polypeptide reads, in one-letter code: Large ribosomal subunit protein uL24 (113 aa).

It belongs to the universal ribosomal protein uL24 family. Part of the 50S ribosomal subunit.

Functionally, one of two assembly initiator proteins, it binds directly to the 5'-end of the 23S rRNA, where it nucleates assembly of the 50S subunit. One of the proteins that surrounds the polypeptide exit tunnel on the outside of the subunit. The chain is Large ribosomal subunit protein uL24 from Synechococcus sp. (strain RCC307).